A 366-amino-acid polypeptide reads, in one-letter code: RNA 3'-terminal phosphate cyclase (366 aa).

Q104, P131, Y294, D297, Q298, and H320 together coordinate ATP. H320 (tele-AMP-histidine intermediate) is an active-site residue.

This sequence belongs to the RNA 3'-terminal cyclase family. Type 1 subfamily.

Its subcellular location is the nucleus. The protein localises to the nucleoplasm. It carries out the reaction a 3'-end 3'-phospho-ribonucleotide-RNA + ATP = a 3'-end 2',3'-cyclophospho-ribonucleotide-RNA + AMP + diphosphate. Catalyzes the conversion of 3'-phosphate to a 2',3'-cyclic phosphodiester at the end of RNA. The mechanism of action of the enzyme occurs in 3 steps: (A) adenylation of the enzyme by ATP; (B) transfer of adenylate to an RNA-N3'P to produce RNA-N3'PP5'A; (C) and attack of the adjacent 2'-hydroxyl on the 3'-phosphorus in the diester linkage to produce the cyclic end product. Likely functions in some aspects of cellular RNA processing. Function plays an important role in regulating axon regeneration by inhibiting central nervous system (CNS) axon regeneration following optic nerve injury. The protein is RNA 3'-terminal phosphate cyclase (RTCA) of Macaca fascicularis (Crab-eating macaque).